The sequence spans 509 residues: MMNSPRSLDSSDGSVDSSSVYSGTSSFGSSFTSSTGSGFTNSMLFDDEEAKKKKIRQMQNRQSAAQYRERKKEYLEKLETIVDNLESDRNQLLQQTKQLGMLQNENYLKINQLEEQIESALRENNDLKSRLSDLLSKQQPHDNSNSNSNSNNNSNVSPNNSINILNNNNSSSSNNNNNNSNSNNGGIGSFSNILNNNINNNISSSSPSTPSCSSPSFLEGRHFSHLQQQQQQQPQQQNSPQILQSPIPLQHSPLPIQQISPSSPNQNINRRSRFNIGESRERSILNPISIENVNNNNNNNIKLNGSGDMDTSSDNNSSMNINSINNSSNLNGFNGLSSPNQQPNSPSNRSQPKRQRDLFLQQQQQQQHSDPSSPNISSNNLLLLNNPNGGINSNNNSNSNNSNNSNNSNNIINNNNTSYTPPLASFTSILSIASSPSSSPVISSLAQLSSSPNYNSGGFSSFIDSNNNNSNNNNSGLENNSPSRRYKFHNGGINNISSGNLNSLKGIPK.

The disordered stretch occupies residues 1–42 (MMNSPRSLDSSDGSVDSSSVYSGTSSFGSSFTSSTGSGFTNS). The segment covering 10–39 (SSDGSVDSSSVYSGTSSFGSSFTSSTGSGF) has biased composition (low complexity). A bZIP domain is found at 50-113 (AKKKKIRQMQ…NENYLKINQL (64 aa)). Residues 51-77 (KKKKIRQMQNRQSAAQYRERKKEYLEK) form a basic motif region. The tract at residues 78–99 (LETIVDNLESDRNQLLQQTKQL) is leucine-zipper. 4 disordered regions span residues 134-185 (LLSK…SNNG), 223-275 (FSHL…SRFN), 290-414 (IENV…IINN), and 465-509 (SNNN…GIPK). Low complexity-rich tracts occupy residues 226 to 248 (LQQQ…SPIP), 255 to 269 (PIQQ…QNIN), 292 to 350 (NVNN…SNRS), 361 to 414 (QQQQ…IINN), 465 to 483 (SNNN…NSPS), and 490 to 509 (NGGI…GIPK).

This sequence belongs to the bZIP family.

Its subcellular location is the nucleus. Probable transcriptional regulator. The sequence is that of Probable basic-leucine zipper transcription factor H (bzpH) from Dictyostelium discoideum (Social amoeba).